A 21-amino-acid chain; its full sequence is Phospholipase A2 crotoxin basic chain (21 aa).

It belongs to the phospholipase A2 family. Group II subfamily. Ca(2+) serves as cofactor. As to expression, expressed by the venom gland.

Its subcellular location is the secreted. The catalysed reaction is a 1,2-diacyl-sn-glycero-3-phosphocholine + H2O = a 1-acyl-sn-glycero-3-phosphocholine + a fatty acid + H(+). Snake venom phospholipase A2 (PLA2) that induces a conspicuous local myotoxic effect and moderate footpad edema. In vitro, it shows anticoagulant effects and is not cytotoxic on myoblast but is able to lyse myotubes. PLA2 catalyzes the calcium-dependent hydrolysis of the 2-acyl groups in 3-sn-phosphoglycerides. The sequence is that of Phospholipase A2 crotoxin basic chain from Crotalus durissus cumanensis (South American rattlesnake).